The chain runs to 498 residues: MRTNPTTSRPGVSTIEEKSTGRIDQIIGPVLDVTFPPGKLPYIYNALVVQSIDTANKQINVTCEVQQLLGNNRVRAVAMSATDGLMRGMEVIDTGAPLSVPVGGATLGRIFNVLGEPVDNLGPVDSSATFPIHRSAPAFIELDTKLSIFETGIKVVDLLAPYRRGGKIGLFGGAGVGKTVLIMELINNIAKAHGGVSVFGGVGERTREGNDLYMEMKESGVINEKNIEESKVALVYGQMNEPPGARMRVGLTALTMAEYFRDVNKQDVLLFIDNIFRFVQAGSEVSALLGRMPSAVGYQPTLSTEMGSLQERIASTKKGSITSIQAVYVPADDLTDPAPATTFAHLDATTVLSRGLASKGIYPAVDPLDSTSTMLQPRIVGNEHYETAQRVKETLQRYKELQDIIAILGLDELSEEDRLTVARARKIERFLSQPFFVAEVFTGSAGKYVGLAETIRGFQLILSGELDGLPEQAFYLVGNIDEASTKAITLEEENKSKK.

172–179 is an ATP binding site; the sequence is GGAGVGKT.

This sequence belongs to the ATPase alpha/beta chains family. As to quaternary structure, F-type ATPases have 2 components, CF(1) - the catalytic core - and CF(0) - the membrane proton channel. CF(1) has five subunits: alpha(3), beta(3), gamma(1), delta(1), epsilon(1). CF(0) has four main subunits: a(1), b(1), b'(1) and c(9-12).

Its subcellular location is the plastid. The protein localises to the chloroplast thylakoid membrane. It catalyses the reaction ATP + H2O + 4 H(+)(in) = ADP + phosphate + 5 H(+)(out). Functionally, produces ATP from ADP in the presence of a proton gradient across the membrane. The catalytic sites are hosted primarily by the beta subunits. This chain is ATP synthase subunit beta, chloroplastic, found in Lolium perenne (Perennial ryegrass).